A 91-amino-acid polypeptide reads, in one-letter code: Small ribosomal subunit protein uS19 (91 aa).

It belongs to the universal ribosomal protein uS19 family.

Functionally, protein S19 forms a complex with S13 that binds strongly to the 16S ribosomal RNA. In Prochlorococcus marinus (strain MIT 9303), this protein is Small ribosomal subunit protein uS19.